Reading from the N-terminus, the 89-residue chain is Small ribosomal subunit protein uS15 (89 aa).

Belongs to the universal ribosomal protein uS15 family. In terms of assembly, part of the 30S ribosomal subunit. Forms a bridge to the 50S subunit in the 70S ribosome, contacting the 23S rRNA.

Its function is as follows. One of the primary rRNA binding proteins, it binds directly to 16S rRNA where it helps nucleate assembly of the platform of the 30S subunit by binding and bridging several RNA helices of the 16S rRNA. In terms of biological role, forms an intersubunit bridge (bridge B4) with the 23S rRNA of the 50S subunit in the ribosome. The polypeptide is Small ribosomal subunit protein uS15 (Vibrio cholerae serotype O1 (strain ATCC 39541 / Classical Ogawa 395 / O395)).